Here is a 150-residue protein sequence, read N- to C-terminus: Protein-arginine-phosphatase (150 aa).

Cysteine 7 acts as the Nucleophile in catalysis. Position 8-13 (8-13 (TGNTCR)) interacts with substrate. The active site involves arginine 13. Aspartate 118 functions as the Proton donor/acceptor in the catalytic mechanism.

Belongs to the low molecular weight phosphotyrosine protein phosphatase family.

The catalysed reaction is N(omega)-phospho-L-arginyl-[protein] + H2O = L-arginyl-[protein] + phosphate. Efficiently inhibited by Cu(2+) ion, Zn(2+) ion, sodium pyrophosphate and N-ethylmaleimide, while the addition of Mg(2+), Ca(2+) or Fe(3+) ions has minimal effect. Inhibited in a competitive manner by vanadate. Functionally, catalyzes the specific dephosphorylation of phosphoarginine residues in a large number of proteins. Counteracts the protein arginine kinase McsB in vivo. Can dephosphorylate CtsR-P; thus, can restore the DNA-binding ability of the CtsR repressor by reversing the McsB-mediated phosphorylation. Is the only active pArg phosphatase present in B.subtilis. Exhibits almost no activity against pSer, pThr, or pTyr peptides. Appears to play a role in B.subtilis stress resistance. Protein arginine phosphorylation has a physiologically important role and is involved in the regulation of many critical cellular processes, such as protein homeostasis, motility, competence, and stringent and stress responses, by regulating gene expression and protein activity. This Bacillus subtilis (strain 168) protein is Protein-arginine-phosphatase (ywlE).